The sequence spans 434 residues: Probable phosphoglucosamine mutase (434 aa).

The Phosphoserine intermediate role is filled by S91. S91, D229, D231, and D233 together coordinate Mg(2+). S91 is subject to Phosphoserine.

Belongs to the phosphohexose mutase family. It depends on Mg(2+) as a cofactor. Activated by phosphorylation.

The enzyme catalyses alpha-D-glucosamine 1-phosphate = D-glucosamine 6-phosphate. Functionally, catalyzes the conversion of glucosamine-6-phosphate to glucosamine-1-phosphate. This Methanosarcina barkeri (strain Fusaro / DSM 804) protein is Probable phosphoglucosamine mutase.